A 156-amino-acid chain; its full sequence is 6,7-dimethyl-8-ribityllumazine synthase (156 aa).

5-amino-6-(D-ribitylamino)uracil-binding positions include Phe-22, 56–58 (AFE), and 80–82 (AVI). Position 85-86 (85-86 (ST)) interacts with (2S)-2-hydroxy-3-oxobutyl phosphate. His-88 (proton donor) is an active-site residue. Phe-113 is a 5-amino-6-(D-ribitylamino)uracil binding site. Arg-127 serves as a coordination point for (2S)-2-hydroxy-3-oxobutyl phosphate.

The protein belongs to the DMRL synthase family.

It carries out the reaction (2S)-2-hydroxy-3-oxobutyl phosphate + 5-amino-6-(D-ribitylamino)uracil = 6,7-dimethyl-8-(1-D-ribityl)lumazine + phosphate + 2 H2O + H(+). The protein operates within cofactor biosynthesis; riboflavin biosynthesis; riboflavin from 2-hydroxy-3-oxobutyl phosphate and 5-amino-6-(D-ribitylamino)uracil: step 1/2. Its function is as follows. Catalyzes the formation of 6,7-dimethyl-8-ribityllumazine by condensation of 5-amino-6-(D-ribitylamino)uracil with 3,4-dihydroxy-2-butanone 4-phosphate. This is the penultimate step in the biosynthesis of riboflavin. This chain is 6,7-dimethyl-8-ribityllumazine synthase, found in Caldicellulosiruptor saccharolyticus (strain ATCC 43494 / DSM 8903 / Tp8T 6331).